Consider the following 605-residue polypeptide: UvrABC system protein C (605 aa).

Residues 14 to 92 (QSCGVYKMVG…IKSLKPLYNI (79 aa)) form the GIY-YIG domain. The 36-residue stretch at 202 to 237 (KEVKEQLLFTMRKCSSEENYELAAIYRDRVKFLEQI) folds into the UVR domain.

The protein belongs to the UvrC family. In terms of assembly, interacts with UvrB in an incision complex.

The protein localises to the cytoplasm. In terms of biological role, the UvrABC repair system catalyzes the recognition and processing of DNA lesions. UvrC both incises the 5' and 3' sides of the lesion. The N-terminal half is responsible for the 3' incision and the C-terminal half is responsible for the 5' incision. This Wolbachia pipientis wMel protein is UvrABC system protein C.